We begin with the raw amino-acid sequence, 107 residues long: DNA polymerase delta subunit 4 (107 aa).

Positions 1 to 16 (MGRKRLITDSYPVVKR) match the PCNA-interaction protein motif (PIP box) motif. The segment at 1-44 (MGRKRLITDSYPVVKRREGPAGHSKGELAPELGEEPQPRDEEEA) is disordered. The span at 15-28 (KRREGPAGHSKGEL) shows a compositional bias: basic and acidic residues.

The protein belongs to the DNA polymerase delta subunit 4 family. As to quaternary structure, component of the tetrameric DNA polymerase delta complex (Pol-delta4), which consists of POLD1/p125, POLD2/p50, POLD3/p66/p68 and POLD4/p12, with POLD1 bearing DNA polymerase and 3' to 5' proofreading exonuclease activities. Within this complex, directly interacts with POLD1 and POLD2. Directly interacts with PCNA, as do POLD1 and POLD3; this interaction stimulates Pol-delta4 polymerase activity. As POLD1 and POLD2, directly interacts with WRNIP1; this interaction stimulates DNA polymerase delta-mediated DNA synthesis, independently of the presence of PCNA. This stimulation may be due predominantly to an increase of initiation frequency and also to increased processivity. Upon genotoxic stress induced by DNA damaging agents or by replication stress, POLD4 is proteolytically degraded and Pol-delta4 is converted into a trimeric form of the complex (Pol-delta3) which has an increased proofreading activity. The DNA polymerase delta complex interacts with POLDIP2; this interaction is probably mediated through direct binding to POLD2. Post-translationally, ubiquitinated; undergoes 'Lys-48'-linked ubiquitination in response to UV irradiation, leading to proteasomal degradation. This modification is partly mediated by RNF8 and by the DCX(DTL) E3 ubiquitin ligase complex (also called CRL4(CDT2)). Efficient degradation requires the presence of PCNA and is required for the inhibition of fork progression after DNA damage.

Its subcellular location is the nucleus. Its function is as follows. As a component of the tetrameric DNA polymerase delta complex (Pol-delta4), plays a role in high fidelity genome replication and repair. Within this complex, increases the rate of DNA synthesis and decreases fidelity by regulating POLD1 polymerase and proofreading 3' to 5' exonuclease activity. Pol-delta4 participates in Okazaki fragment processing, through both the short flap pathway, as well as a nick translation system. Under conditions of DNA replication stress, required for the repair of broken replication forks through break-induced replication (BIR), a mechanism that may induce segmental genomic duplications of up to 200 kb. Involved in Pol-delta4 translesion synthesis (TLS) of templates carrying O6-methylguanine or abasic sites. Its degradation in response to DNA damage is required for the inhibition of fork progression and cell survival. The protein is DNA polymerase delta subunit 4 (POLD4) of Homo sapiens (Human).